The following is a 415-amino-acid chain: Putative serine/threonine-protein phosphatase 4 regulatory subunit 1-like (415 aa).

HEAT repeat units follow at residues 86-124, 163-202, 203-241, and 242-280; these read VMEI…SNFP, LLPR…TEKF, LIPK…RRTQ, and LFPL…RAGL. Positions 301 to 318 are enriched in low complexity; it reads FASGSPAPSSGGNTSPAS. The disordered stretch occupies residues 301-362; the sequence is FASGSPAPSS…GPAESPVESC (62 aa).

In terms of biological role, may be a regulatory subunit of serine/threonine-protein phosphatase 4. The sequence is that of Putative serine/threonine-protein phosphatase 4 regulatory subunit 1-like (PPP4R1L) from Homo sapiens (Human).